The primary structure comprises 364 residues: MKTVTQTLNVALGERSYPIHIGTDVLSRPELILPFLSQKRVVVVTNTSVAPLYLDELRSGLEKCGIETLPVVLPDGEQYKTWETLNLIFDALLAARCERNTTLIALGGGVIGDMGGFAAACYQRGMPFIQVPTTLLSQVDSSVGGKTAINHPMGKNMVGAFYQPRLVLADLSTLDTLPDRELKAGLAEVIKYGLIRDPDFFVWLEANLEKLLVRDKSALAYAVHRSCANKAEVVAADERESGERALLNLGHTFGHAIETGLGYGEWLHGEAVAAGTLIAAELSCRLGWIDADSVARIEKIFVRSGLPVKAPDLGAARYLELMSHDKKVQDGKLRLVLLREIGKAVVSDAATTAQMVDAIEARCT.

Residues 75 to 80 (DGEQYK), 109 to 113 (GVIGD), 133 to 134 (TT), Lys-146, Lys-155, and 173 to 176 (TLDT) contribute to the NAD(+) site. Positions 188, 251, and 268 each coordinate Zn(2+).

This sequence belongs to the sugar phosphate cyclases superfamily. Dehydroquinate synthase family. The cofactor is Co(2+). Zn(2+) serves as cofactor. Requires NAD(+) as cofactor.

Its subcellular location is the cytoplasm. The catalysed reaction is 7-phospho-2-dehydro-3-deoxy-D-arabino-heptonate = 3-dehydroquinate + phosphate. Its pathway is metabolic intermediate biosynthesis; chorismate biosynthesis; chorismate from D-erythrose 4-phosphate and phosphoenolpyruvate: step 2/7. Catalyzes the conversion of 3-deoxy-D-arabino-heptulosonate 7-phosphate (DAHP) to dehydroquinate (DHQ). The chain is 3-dehydroquinate synthase from Dechloromonas aromatica (strain RCB).